The following is a 500-amino-acid chain: Cytochrome P450 11B1, mitochondrial (500 aa).

A mitochondrion-targeting transit peptide spans 1–24 (MAFRLKSDVRLAGSWLCLRGARAL). Cys447 lines the heme pocket.

It belongs to the cytochrome P450 family. Requires heme as cofactor.

It localises to the mitochondrion inner membrane. It catalyses the reaction a steroid + 2 reduced [adrenodoxin] + O2 + 2 H(+) = an 11beta-hydroxysteroid + 2 oxidized [adrenodoxin] + H2O. It carries out the reaction 11-deoxycortisol + 2 reduced [adrenodoxin] + O2 + 2 H(+) = cortisol + 2 oxidized [adrenodoxin] + H2O. The enzyme catalyses 21-hydroxyprogesterone + 2 reduced [adrenodoxin] + O2 + 2 H(+) = corticosterone + 2 oxidized [adrenodoxin] + H2O. The catalysed reaction is 21-hydroxyprogesterone + 2 reduced [adrenodoxin] + O2 + 2 H(+) = 18-hydroxy-11-deoxycorticosterone + 2 oxidized [adrenodoxin] + H2O. It catalyses the reaction 21-hydroxyprogesterone + 2 reduced [adrenodoxin] + O2 + 2 H(+) = 19-hydroxy-11-deoxycorticosterone + 2 oxidized [adrenodoxin] + H2O. It carries out the reaction cortisol + 2 reduced [adrenodoxin] + O2 + 2 H(+) = 18-hydroxycortisol + 2 oxidized [adrenodoxin] + H2O. The enzyme catalyses 11-deoxycortisol + 2 reduced [adrenodoxin] + O2 + 2 H(+) = 18-hydroxy-11-deoxycortisol + 2 oxidized [adrenodoxin] + H2O. It functions in the pathway steroid biosynthesis; glucocorticoid biosynthesis. The protein operates within steroid hormone biosynthesis. Functionally, a cytochrome P450 monooxygenase involved in the biosynthesis of adrenal corticoids. Catalyzes a variety of reactions that are essential for many species, including detoxification, defense, and the formation of endogenous chemicals like steroid hormones. Steroid 11beta, 18- and 19-hydroxylase with preferred regioselectivity at 11beta, then 18, and lastly 19. Catalyzes the hydroxylation of 11-deoxycortisol and 11-deoxycorticosterone (21-hydroxyprogesterone) at 11beta position, yielding cortisol or corticosterone, respectively, but cannot produce aldosterone. Mechanistically, uses molecular oxygen inserting one oxygen atom into a substrate for hydroxylation and reducing the second into a water molecule. Two electrons are provided by NADPH via a two-protein mitochondrial transfer system comprising flavoprotein FDXR (adrenodoxin/ferredoxin reductase) and nonheme iron-sulfur protein FDX1 or FDX2 (adrenodoxin/ferredoxin). Due to its lack of 18-oxidation activity, it is incapable of generating aldosterone. Could also be involved in the androgen metabolic pathway. In Cavia porcellus (Guinea pig), this protein is Cytochrome P450 11B1, mitochondrial (CYP11B1).